Here is a 149-residue protein sequence, read N- to C-terminus: 3-dehydroquinate dehydratase (149 aa).

The active-site Proton acceptor is Tyr24. 3 residues coordinate substrate: Asn75, His81, and Asp88. His101 acts as the Proton donor in catalysis. Residues 102-103 (IS) and Arg112 each bind substrate.

The protein belongs to the type-II 3-dehydroquinase family. In terms of assembly, homododecamer.

It catalyses the reaction 3-dehydroquinate = 3-dehydroshikimate + H2O. It participates in metabolic intermediate biosynthesis; chorismate biosynthesis; chorismate from D-erythrose 4-phosphate and phosphoenolpyruvate: step 3/7. In terms of biological role, catalyzes a trans-dehydration via an enolate intermediate. The polypeptide is 3-dehydroquinate dehydratase (Methylobacterium radiotolerans (strain ATCC 27329 / DSM 1819 / JCM 2831 / NBRC 15690 / NCIMB 10815 / 0-1)).